The primary structure comprises 212 residues: Adenylate kinase (212 aa).

14 to 19 (GSGKGT) provides a ligand contact to ATP. Residues 34–63 (STGDLFRKKISEDSQFAAQIQNYLSSGSYV) form an NMP region. AMP contacts are provided by residues threonine 35, arginine 40, 61–63 (SYV), 89–92 (GYPR), and glutamine 96. The interval 126-163 (QRLFCQKCQKSYNLLLAKPKNGLKCDLDNTDLITRNDD) is LID. ATP is bound at residue arginine 127. Zn(2+)-binding residues include cysteine 130 and cysteine 133. Residue 136–137 (SY) coordinates ATP. Cysteine 150 and aspartate 153 together coordinate Zn(2+). 2 residues coordinate AMP: arginine 160 and arginine 171. Glutamine 199 is a binding site for ATP.

The protein belongs to the adenylate kinase family. Monomer.

Its subcellular location is the cytoplasm. The catalysed reaction is AMP + ATP = 2 ADP. Its pathway is purine metabolism; AMP biosynthesis via salvage pathway; AMP from ADP: step 1/1. Catalyzes the reversible transfer of the terminal phosphate group between ATP and AMP. Plays an important role in cellular energy homeostasis and in adenine nucleotide metabolism. This Mesomycoplasma hyopneumoniae (strain 7448) (Mycoplasma hyopneumoniae) protein is Adenylate kinase.